We begin with the raw amino-acid sequence, 58 residues long: Basic phospholipase A2 homolog PocTX (58 aa).

A disulfide bridge connects residues Cys-29 and Cys-45.

As to expression, expressed by the venom gland.

Its subcellular location is the secreted. Functionally, wasp venom phospholipase A2 homolog that lacks enzymatic activity. The polypeptide is Basic phospholipase A2 homolog PocTX (Polybia occidentalis (Paper wasp)).